Consider the following 92-residue polypeptide: Acylphosphatase (92 aa).

The Acylphosphatase-like domain occupies 5 to 92 (RVHIIVSGLV…TSCREFRILT (88 aa)). Active-site residues include arginine 20 and asparagine 38.

This sequence belongs to the acylphosphatase family.

The enzyme catalyses an acyl phosphate + H2O = a carboxylate + phosphate + H(+). This Chlorobaculum tepidum (strain ATCC 49652 / DSM 12025 / NBRC 103806 / TLS) (Chlorobium tepidum) protein is Acylphosphatase (acyP).